A 1354-amino-acid polypeptide reads, in one-letter code: MVKLSGIILLSLVWLKLNNSYEIRERISNKNNPDDDILKINVEEDKKKICNNILIFLNADDILTENNKYSFMGKCEKLIDDIKNENNSPDITNEFALSLMHMRSKHTITSSINNNKALKNIIISLDKSMSEPEVINRVKHIIRFNKYLAGKLSYKNIGESLVLRVSSHERMRRSKRELVRNILKDFHIYGLYFDLKSENSTLLKNQESESLINIKNEKLCQTYIHLCQKFYEQTSVYYKIKTILNEVIKHTKDNYALEGEYDISKLFSLENSISQVSQHSDHMLTNESLIYDMNKSNYIKYNQLIHEVIPEDGNIEEQVKKGNGRYIVVVKNLKKAIGNSENYDNIMNIIKKYLINVTKNNKEILDMVMELGNEDIEQFMTQLVFFIHYGFLLITEDKHMIYLSDMIPTYTNLYRANEVLLLHIMDIKFESDDFNKYEKYKFETSDNDKETYSLLNEIDSITQLPKLSENVANDYFSKIMDKDAYTMLTLDKGINKYQFYFTMAFKDCNINQNYTPLAKDLWTELIYTFDNFGWFYFNPNKIMSSISKSNFIRHVLVSRNFILKNMESLIYLDTQISRLMDMIGLSFLADKSEYILDLSLSNYLFLYVNEYHIFKKDENVKLIHTYDYIDSIANNYYYFSEKKYPVFKTDYSSKLYTNFPNVYSLAYQLFNELAINMNISNTPLKKKLKNKSNYAYFTILNLIGPNHDIYSRGPRLIFAAYMLTLVFFIESQIDISRYRPNDMYFMKKAMPLLAPINRDDFNILKKRCSLLTDFIKINRNKAKNEHSRVEEYIKILNLVTILLWGKESNKSLYYDNDVSLYKKLLIACVFNGGITVQEKVIKSIKRSCNMEQYGLNKSNIEDFVNVNLSVYQWNPDILEKIATAFTLTCKVHNMIYEPFDVHKVDAKDYYKLAVAPDMVKTYHCFLLGRQAERLLESLILKKNFVKFKVEDAIDVYEFFYVTRILSKNPREDFELFLKNKKEYQKKQKDEIIKNSKLDENVTDILFQNYECYWFKSYENFKSLWMHAASNLGPGAYLRNFFSEIWNNMGTLFKKQSKVRDVEYFNINLIGGTLIDYYSPLLKSEEHCRNVTQKLFISMKDSGTKSRIEIPDEIKSKYFQCKLDYYKNNHSDPVHKIYSRDFLENKVYVFKQPYYLLSNIDDKNKKQLLRLFITETTLQYLLLDDIQIPECLGRCTIEHFNKVLLTTANAKPHETIIYNGLIPENCKSKIRKEMKIFIHSSFVHNLTRDYLTGELIRTQDIQNGDVHVCMGSDTYYTENILTDQHFDLTHKPQFNFPENNNYRVFLKKNINKIAKNPESQCYVHYELSVLDTDIPDPYREIGKDLITNIELLESK.

Positions 1-20 (MVKLSGIILLSLVWLKLNNS) are cleaved as a signal peptide. Cystine bridges form between Cys-50–Cys-75 and Cys-220–Cys-227. A helical transmembrane segment spans residues 716-736 (LIFAAYMLTLVFFIESQIDIS). 3 disulfides stabilise this stretch: Cys-768/Cys-828, Cys-848/Cys-889, and Cys-924/Cys-1011.

Component of the RhopH complex. RhopH complex is composed of CLAG3.1/CLAG3.2, RhopH2 and RhopH3 with a 1:1:1 subunit stoichiometry. Interacts with CLAG3.1/CLAG3.2.

Its subcellular location is the host cell membrane. The protein localises to the parasitophorous vacuole membrane. It localises to the host cytoplasm. It is found in the cytoplasm. The protein resides in the cytoplasmic vesicle. Its subcellular location is the secretory vesicle. The protein localises to the rhoptry. Participates in the formation of new permeability pathways in Plasmodium-infected erythrocytes enabling the uptake of nutrients from the blood plasma. Required for maintaining invasion capacity of merozoites. Required for parasite growth and proliferation. The polypeptide is High molecular weight rhoptry protein 2 (Plasmodium berghei (strain Anka)).